Here is a 517-residue protein sequence, read N- to C-terminus: L-amino-acid oxidase (517 aa).

The N-terminal stretch at 1–19 is a signal peptide; it reads MNVFSIFSLVFLAAFGSCA. An intrachain disulfide couples Cys-29 to Cys-192. FAD is bound by residues 62–63, 82–83, Arg-90, and 106–109; these read MA, EA, and GPMR. Arg-109 contacts substrate. Asn-191 is a glycosylation site (N-linked (GlcNAc...) asparagine). Val-280 provides a ligand contact to FAD. A disulfide bridge connects residues Cys-350 and Cys-431. A glycan (N-linked (GlcNAc...) asparagine) is linked at Asn-380. Tyr-391 serves as a coordination point for substrate. FAD contacts are provided by residues Glu-476 and 483 to 488; that span reads GWLDST. Substrate is bound at residue 483–484; it reads GW.

This sequence belongs to the flavin monoamine oxidase family. FIG1 subfamily. Monomer. This is in contrast with most of its orthologs, that are non-covalently linked homodimers. FAD serves as cofactor. Post-translationally, N-glycosylated. Expressed by the venom gland.

It localises to the secreted. The enzyme catalyses an L-alpha-amino acid + O2 + H2O = a 2-oxocarboxylate + H2O2 + NH4(+). It catalyses the reaction L-leucine + O2 + H2O = 4-methyl-2-oxopentanoate + H2O2 + NH4(+). The catalysed reaction is L-phenylalanine + O2 + H2O = 3-phenylpyruvate + H2O2 + NH4(+). It carries out the reaction L-tryptophan + O2 + H2O = indole-3-pyruvate + H2O2 + NH4(+). The enzyme catalyses L-methionine + O2 + H2O = 4-methylsulfanyl-2-oxobutanoate + H2O2 + NH4(+). It catalyses the reaction L-isoleucine + O2 + H2O = (S)-3-methyl-2-oxopentanoate + H2O2 + NH4(+). The catalysed reaction is L-arginine + O2 + H2O = 5-guanidino-2-oxopentanoate + H2O2 + NH4(+). It carries out the reaction L-aspartate + O2 + H2O = oxaloacetate + H2O2 + NH4(+). The enzyme catalyses L-histidine + O2 + H2O = 3-(imidazol-5-yl)pyruvate + H2O2 + NH4(+). It catalyses the reaction L-asparagine + O2 + H2O = 2-oxosuccinamate + H2O2 + NH4(+). The catalysed reaction is L-tyrosine + O2 + H2O = 3-(4-hydroxyphenyl)pyruvate + H2O2 + NH4(+). It carries out the reaction L-glutamine + O2 + H2O = 2-oxoglutaramate + H2O2 + NH4(+). The enzyme catalyses L-alanine + O2 + H2O = pyruvate + H2O2 + NH4(+). It catalyses the reaction L-lysine + O2 + H2O = 6-amino-2-oxohexanoate + H2O2 + NH4(+). The catalysed reaction is L-glutamate + O2 + H2O = H2O2 + 2-oxoglutarate + NH4(+). Catalyzes an oxidative deamination of predominantly hydrophobic and aromatic L-amino acids, thus producing hydrogen peroxide that may contribute to the diverse toxic effects of this enzyme. Is highly active against L-Tyr, L-Asp, L-Phe, L-Glu, L-Trp, L-His, L-Gln, L-Ile, L-Met, L-Leu and moderately active against L-Lys, L-Arg, L-Ala and L-Asn. Exhibits diverse biological activities, such as edema, inflammatory cell infiltration, cytotoxicity and apoptosis, as well as induction of platelet aggregation. Effects of snake L-amino oxidases on platelets are controversial, since they either induce aggregation or inhibit agonist-induced aggregation. These different effects are probably due to different experimental conditions. This protein may also induce hemorrhage, hemolysis, and have antibacterial and antiparasitic activities. The protein is L-amino-acid oxidase of Bungarus fasciatus (Banded krait).